Reading from the N-terminus, the 257-residue chain is Phosphate import ATP-binding protein PstB (257 aa).

In terms of domain architecture, ABC transporter spans F11 to V252. G43 to S50 is an ATP binding site.

This sequence belongs to the ABC transporter superfamily. Phosphate importer (TC 3.A.1.7) family. The complex is composed of two ATP-binding proteins (PstB), two transmembrane proteins (PstC and PstA) and a solute-binding protein (PstS).

The protein localises to the cell membrane. The enzyme catalyses phosphate(out) + ATP + H2O = ADP + 2 phosphate(in) + H(+). Part of the ABC transporter complex PstSACB involved in phosphate import. Responsible for energy coupling to the transport system. This Saccharolobus solfataricus (strain ATCC 35092 / DSM 1617 / JCM 11322 / P2) (Sulfolobus solfataricus) protein is Phosphate import ATP-binding protein PstB.